The chain runs to 271 residues: Tryptophan synthase alpha chain (271 aa).

Active-site proton acceptor residues include E59 and D70.

It belongs to the TrpA family. In terms of assembly, tetramer of two alpha and two beta chains.

The enzyme catalyses (1S,2R)-1-C-(indol-3-yl)glycerol 3-phosphate + L-serine = D-glyceraldehyde 3-phosphate + L-tryptophan + H2O. Its pathway is amino-acid biosynthesis; L-tryptophan biosynthesis; L-tryptophan from chorismate: step 5/5. Functionally, the alpha subunit is responsible for the aldol cleavage of indoleglycerol phosphate to indole and glyceraldehyde 3-phosphate. This chain is Tryptophan synthase alpha chain, found in Methanosarcina mazei (strain ATCC BAA-159 / DSM 3647 / Goe1 / Go1 / JCM 11833 / OCM 88) (Methanosarcina frisia).